Here is a 276-residue protein sequence, read N- to C-terminus: ESX-2 secretion-associated protein EspG2 (276 aa).

It belongs to the EspG family. In terms of assembly, interacts specifically with ESX-2-dependent PE/PPE proteins.

It localises to the cytoplasm. In terms of biological role, specific chaperone for cognate PE/PPE proteins. Plays an important role in preventing aggregation of PE/PPE dimers. The polypeptide is ESX-2 secretion-associated protein EspG2 (Mycobacterium tuberculosis (strain CDC 1551 / Oshkosh)).